The following is a 493-amino-acid chain: Glutamyl-tRNA(Gln) amidotransferase subunit A (493 aa).

Catalysis depends on charge relay system residues lysine 79 and serine 159. Serine 183 functions as the Acyl-ester intermediate in the catalytic mechanism.

It belongs to the amidase family. GatA subfamily. As to quaternary structure, heterotrimer of A, B and C subunits.

The catalysed reaction is L-glutamyl-tRNA(Gln) + L-glutamine + ATP + H2O = L-glutaminyl-tRNA(Gln) + L-glutamate + ADP + phosphate + H(+). Its function is as follows. Allows the formation of correctly charged Gln-tRNA(Gln) through the transamidation of misacylated Glu-tRNA(Gln) in organisms which lack glutaminyl-tRNA synthetase. The reaction takes place in the presence of glutamine and ATP through an activated gamma-phospho-Glu-tRNA(Gln). The protein is Glutamyl-tRNA(Gln) amidotransferase subunit A of Sinorhizobium fredii (strain NBRC 101917 / NGR234).